Reading from the N-terminus, the 290-residue chain is Protoheme IX farnesyltransferase 1 (290 aa).

The next 8 helical transmembrane spans lie at 8-28 (ITKPGIIFGNLISVAAGFFLA), 36-56 (FLLLLTTLVGVGLVIASGCVV), 85-105 (AAFVYALVLLLNGTALLFQVV), 108-128 (LSAVVVLLGYVFYVFFYTMWY), 131-151 (NSVYGTLVGSISGAVPPLVGY), 152-172 (LAVTNYISLEATLLFVMFCLW), 211-231 (AYVVAFGVVAIGLFMLGEAGY), and 269-289 (LLVVMGISGVLGLELIPLPFI).

It belongs to the UbiA prenyltransferase family. Protoheme IX farnesyltransferase subfamily.

It localises to the cell inner membrane. The enzyme catalyses heme b + (2E,6E)-farnesyl diphosphate + H2O = Fe(II)-heme o + diphosphate. It functions in the pathway porphyrin-containing compound metabolism; heme O biosynthesis; heme O from protoheme: step 1/1. In terms of biological role, converts heme B (protoheme IX) to heme O by substitution of the vinyl group on carbon 2 of heme B porphyrin ring with a hydroxyethyl farnesyl side group. In Vibrio campbellii (strain ATCC BAA-1116), this protein is Protoheme IX farnesyltransferase 1.